A 31-amino-acid chain; its full sequence is U2-theraphotoxin-Hhn1a (31 aa).

3 disulfide bridges follow: Cys2–Cys14, Cys7–Cys19, and Cys13–Cys26.

Expressed by the venom gland.

It is found in the secreted. Agglutinates erythrocytes. In Cyriopagopus hainanus (Chinese bird spider), this protein is U2-theraphotoxin-Hhn1a.